Here is a 165-residue protein sequence, read N- to C-terminus: Chorismate pyruvate-lyase (165 aa).

Residues M35, R77, L115, and E156 each contribute to the substrate site.

This sequence belongs to the UbiC family. As to quaternary structure, monomer.

The protein resides in the cytoplasm. It carries out the reaction chorismate = 4-hydroxybenzoate + pyruvate. The protein operates within cofactor biosynthesis; ubiquinone biosynthesis. Removes the pyruvyl group from chorismate, with concomitant aromatization of the ring, to provide 4-hydroxybenzoate (4HB) for the ubiquinone pathway. The protein is Chorismate pyruvate-lyase of Citrobacter koseri (strain ATCC BAA-895 / CDC 4225-83 / SGSC4696).